Here is a 488-residue protein sequence, read N- to C-terminus: Tyrosine-protein kinase Srms (488 aa).

An SH3 domain is found at 51 to 112 (PFPQLFLALY…PITHVAKASP (62 aa)). In terms of domain architecture, SH2 spans 120 to 212 (WYFSGVSRTQ…LIQNPLLQPC (93 aa)). The 259-residue stretch at 230-488 (FALGRKLGEG…KLHAIHRCHP (259 aa)) folds into the Protein kinase domain. Residues 236–244 (LGEGYFGEV) and Lys-258 each bind ATP. Asp-350 (proton acceptor) is an active-site residue. A Phosphotyrosine; by autocatalysis modification is found at Tyr-380.

Belongs to the protein kinase superfamily. Tyr protein kinase family. SRC subfamily. In terms of assembly, interacts (via the SH2 and SH3 domains) with DOK1. Interacts with KHDRBS1/SAM68 and VIM. In terms of tissue distribution, highly expressed in most breast cancers (at protein level).

It is found in the cytoplasm. The enzyme catalyses L-tyrosyl-[protein] + ATP = O-phospho-L-tyrosyl-[protein] + ADP + H(+). Its function is as follows. Non-receptor tyrosine-protein kinase which phosphorylates DOK1 on tyrosine residues. Also phosphorylates KHDRBS1/SAM68 and VIM on tyrosine residues. Phosphorylation of KHDRBS1 is EGF-dependent. Phosphorylates OTUB1, promoting deubiquitination of RPTOR. The protein is Tyrosine-protein kinase Srms (SRMS) of Homo sapiens (Human).